A 239-amino-acid polypeptide reads, in one-letter code: Pyridoxine 5'-phosphate synthase (239 aa).

Asparagine 7 lines the 3-amino-2-oxopropyl phosphate pocket. 9 to 10 (DH) is a binding site for 1-deoxy-D-xylulose 5-phosphate. Arginine 18 contributes to the 3-amino-2-oxopropyl phosphate binding site. Histidine 43 (proton acceptor) is an active-site residue. 1-deoxy-D-xylulose 5-phosphate-binding residues include arginine 45 and histidine 50. Glutamate 70 functions as the Proton acceptor in the catalytic mechanism. Residue threonine 100 coordinates 1-deoxy-D-xylulose 5-phosphate. Histidine 192 (proton donor) is an active-site residue. 3-amino-2-oxopropyl phosphate is bound by residues glycine 193 and 214 to 215 (GH).

Belongs to the PNP synthase family. As to quaternary structure, homooctamer; tetramer of dimers.

It localises to the cytoplasm. It catalyses the reaction 3-amino-2-oxopropyl phosphate + 1-deoxy-D-xylulose 5-phosphate = pyridoxine 5'-phosphate + phosphate + 2 H2O + H(+). The protein operates within cofactor biosynthesis; pyridoxine 5'-phosphate biosynthesis; pyridoxine 5'-phosphate from D-erythrose 4-phosphate: step 5/5. Catalyzes the complicated ring closure reaction between the two acyclic compounds 1-deoxy-D-xylulose-5-phosphate (DXP) and 3-amino-2-oxopropyl phosphate (1-amino-acetone-3-phosphate or AAP) to form pyridoxine 5'-phosphate (PNP) and inorganic phosphate. The chain is Pyridoxine 5'-phosphate synthase from Pelagibacter ubique (strain HTCC1062).